Here is a 770-residue protein sequence, read N- to C-terminus: Formate acetyltransferase (770 aa).

Residues 5 to 635 (NEMQKLAWAG…KTGNTPDGRR (631 aa)) enclose the PFL domain. Cysteine 419 functions as the S-acetylcysteine intermediate in the catalytic mechanism. The active-site Cysteine radical intermediate is cysteine 420. In terms of domain architecture, Glycine radical spans 642-770 (PGANPMHGRD…VITRTFTESM (129 aa)). At glycine 745 the chain carries Glycine radical.

It belongs to the glycyl radical enzyme (GRE) family. PFL subfamily. In terms of assembly, homodimer.

Its subcellular location is the cytoplasm. It carries out the reaction formate + acetyl-CoA = pyruvate + CoA. It functions in the pathway fermentation; pyruvate fermentation; formate from pyruvate: step 1/1. Functionally, catalyzes the conversion of pyruvate to formate and acetyl-CoA. The sequence is that of Formate acetyltransferase (pflB) from Haemophilus influenzae (strain ATCC 51907 / DSM 11121 / KW20 / Rd).